The sequence spans 325 residues: RepFIB replication protein A (325 aa).

The tract at residues 279–298 is disordered; that stretch reads APNDESKENPLPPSPAEKVS.

The protein belongs to the initiator RepB protein family.

This protein is essential for plasmid replication; it is involved in copy control functions. In vitro, binds to the DNA repeat units, BCDD'D'', EFG and HIJ. The chain is RepFIB replication protein A (repA) from Escherichia coli.